We begin with the raw amino-acid sequence, 199 residues long: Dephospho-CoA kinase (199 aa).

The DPCK domain occupies 3–199 (TLGVTGGIGS…ELYWAVTGGQ (197 aa)). 11-16 (GSGKTT) lines the ATP pocket.

Belongs to the CoaE family.

It is found in the cytoplasm. The catalysed reaction is 3'-dephospho-CoA + ATP = ADP + CoA + H(+). The protein operates within cofactor biosynthesis; coenzyme A biosynthesis; CoA from (R)-pantothenate: step 5/5. Its function is as follows. Catalyzes the phosphorylation of the 3'-hydroxyl group of dephosphocoenzyme A to form coenzyme A. The chain is Dephospho-CoA kinase from Salinibacter ruber (strain DSM 13855 / M31).